The following is a 99-amino-acid chain: Phosphoribosyl-ATP pyrophosphatase (99 aa).

This sequence belongs to the PRA-PH family.

It localises to the cytoplasm. It catalyses the reaction 1-(5-phospho-beta-D-ribosyl)-ATP + H2O = 1-(5-phospho-beta-D-ribosyl)-5'-AMP + diphosphate + H(+). It participates in amino-acid biosynthesis; L-histidine biosynthesis; L-histidine from 5-phospho-alpha-D-ribose 1-diphosphate: step 2/9. The protein is Phosphoribosyl-ATP pyrophosphatase of Methanosphaerula palustris (strain ATCC BAA-1556 / DSM 19958 / E1-9c).